We begin with the raw amino-acid sequence, 116 residues long: UPF0102 protein Sala_0262 (116 aa).

It belongs to the UPF0102 family.

This Sphingopyxis alaskensis (strain DSM 13593 / LMG 18877 / RB2256) (Sphingomonas alaskensis) protein is UPF0102 protein Sala_0262.